The chain runs to 466 residues: Asparagine--tRNA ligase (466 aa).

This sequence belongs to the class-II aminoacyl-tRNA synthetase family. Homodimer.

It is found in the cytoplasm. The enzyme catalyses tRNA(Asn) + L-asparagine + ATP = L-asparaginyl-tRNA(Asn) + AMP + diphosphate + H(+). This Aliivibrio fischeri (strain ATCC 700601 / ES114) (Vibrio fischeri) protein is Asparagine--tRNA ligase.